Reading from the N-terminus, the 180-residue chain is NEDD8-conjugating enzyme ubc-12 (180 aa).

One can recognise a UBC core domain in the interval 24–180 (VRDKLLAQEL…RVREYISRYC (157 aa)). C112 serves as the catalytic Glycyl thioester intermediate.

The protein belongs to the ubiquitin-conjugating enzyme family. UBC12 subfamily.

The protein resides in the cytoplasm. It catalyses the reaction [E1 NEDD8-activating enzyme]-S-[NEDD8 protein]-yl-L-cysteine + [E2 NEDD8-conjugating enzyme]-L-cysteine = [E1 NEDD8-activating enzyme]-L-cysteine + [E2 NEDD8-conjugating enzyme]-S-[NEDD8-protein]-yl-L-cysteine.. The protein operates within protein modification; protein neddylation. Functionally, accepts the ubiquitin-like protein NEDD8 from the uba-3-ula-1 E1 complex and catalyzes its covalent attachment to other proteins. Plays a role in male tail tip morphogenesis. The sequence is that of NEDD8-conjugating enzyme ubc-12 from Caenorhabditis elegans.